Consider the following 150-residue polypeptide: PTS system galactitol-specific EIIA component (150 aa).

In terms of domain architecture, PTS EIIA type-2 spans M1–Y144. The active-site Tele-phosphohistidine intermediate is H62. H62 bears the Phosphohistidine; by HPr mark.

In terms of assembly, forms a complex with one each of subunit of GatA, GatB and 2 subunits of GatC.

The protein resides in the cytoplasm. Functionally, the phosphoenolpyruvate-dependent sugar phosphotransferase system (sugar PTS), a major carbohydrate active transport system, catalyzes the phosphorylation of incoming sugar substrates concomitantly with their translocation across the cell membrane. The enzyme II complex composed of GatA, GatB and GatC is involved in galactitol transport. This chain is PTS system galactitol-specific EIIA component (gatA), found in Escherichia coli O157:H7.